The chain runs to 370 residues: 4-hydroxy-3-methylbut-2-en-1-yl diphosphate synthase (flavodoxin) (370 aa).

Positions 268, 271, 303, and 310 each coordinate [4Fe-4S] cluster.

It belongs to the IspG family. The cofactor is [4Fe-4S] cluster.

The catalysed reaction is (2E)-4-hydroxy-3-methylbut-2-enyl diphosphate + oxidized [flavodoxin] + H2O + 2 H(+) = 2-C-methyl-D-erythritol 2,4-cyclic diphosphate + reduced [flavodoxin]. Its pathway is isoprenoid biosynthesis; isopentenyl diphosphate biosynthesis via DXP pathway; isopentenyl diphosphate from 1-deoxy-D-xylulose 5-phosphate: step 5/6. Converts 2C-methyl-D-erythritol 2,4-cyclodiphosphate (ME-2,4cPP) into 1-hydroxy-2-methyl-2-(E)-butenyl 4-diphosphate. The protein is 4-hydroxy-3-methylbut-2-en-1-yl diphosphate synthase (flavodoxin) of Bacillus cereus (strain G9842).